A 291-amino-acid chain; its full sequence is Formamidopyrimidine-DNA glycosylase (291 aa).

Catalysis depends on Pro-2, which acts as the Schiff-base intermediate with DNA. Glu-3 acts as the Proton donor in catalysis. Residue Lys-58 is the Proton donor; for beta-elimination activity of the active site. DNA contacts are provided by His-100, Arg-123, and Lys-166. The FPG-type zinc-finger motif lies at 257-291 (SVYGREGKECLQCGTPIIRILQSGRSSFYCSQCQK). Arg-281 (proton donor; for delta-elimination activity) is an active-site residue.

The protein belongs to the FPG family. Monomer. The cofactor is Zn(2+).

It carries out the reaction Hydrolysis of DNA containing ring-opened 7-methylguanine residues, releasing 2,6-diamino-4-hydroxy-5-(N-methyl)formamidopyrimidine.. The enzyme catalyses 2'-deoxyribonucleotide-(2'-deoxyribose 5'-phosphate)-2'-deoxyribonucleotide-DNA = a 3'-end 2'-deoxyribonucleotide-(2,3-dehydro-2,3-deoxyribose 5'-phosphate)-DNA + a 5'-end 5'-phospho-2'-deoxyribonucleoside-DNA + H(+). Functionally, involved in base excision repair of DNA damaged by oxidation or by mutagenic agents. Acts as a DNA glycosylase that recognizes and removes damaged bases. Has a preference for oxidized purines, such as 7,8-dihydro-8-oxoguanine (8-oxoG). Has AP (apurinic/apyrimidinic) lyase activity and introduces nicks in the DNA strand. Cleaves the DNA backbone by beta-delta elimination to generate a single-strand break at the site of the removed base with both 3'- and 5'-phosphates. This Bartonella tribocorum (strain CIP 105476 / IBS 506) protein is Formamidopyrimidine-DNA glycosylase.